Here is a 216-residue protein sequence, read N- to C-terminus: UDP-N-acetylbacillosamine N-acetyltransferase (216 aa).

The active-site Proton acceptor is His137. His146 contacts acetyl-CoA.

The protein belongs to the transferase hexapeptide repeat family. As to quaternary structure, forms oligomers.

It carries out the reaction UDP-N-acetylbacillosamine + acetyl-CoA = UDP-N,N'-diacetylbacillosamine + CoA + H(+). Functionally, catalyzes the conversion of UDP-2,4,6-trideoxy-2-acetamido-4-amino glucose to UDP-2,4,6-trideoxy-2,4-diacetamido glucose, commonly known as UDP-N,N'-diacetylbacillosamine (UDP-diNAcBac). This is UDP-N-acetylbacillosamine N-acetyltransferase from Bacillus subtilis (strain 168).